The chain runs to 362 residues: Probable tocopherol O-methyltransferase, chloroplastic (362 aa).

The N-terminal 55 residues, 1–55 (MAHAAAATGALAPLHPLLRCTSRHLCASASPRAGLCLHHHRRRRRSSRRTKLAVR), are a transit peptide targeting the chloroplast. An SAM motif I region spans residues 141–150 (VVDVGCGIGG). The interval 204–212 (GQFDLVWSM) is SAM motif II. The interval 231–240 (VAAPGARIII) is SAM motif III.

The protein belongs to the class I-like SAM-binding methyltransferase superfamily. gTMT family.

Its subcellular location is the plastid. It is found in the chloroplast. It carries out the reaction gamma-tocopherol + S-adenosyl-L-methionine = (+)-alpha-tocopherol + S-adenosyl-L-homocysteine + H(+). The catalysed reaction is delta-tocotrienol + S-adenosyl-L-methionine = beta-tocotrienol + S-adenosyl-L-homocysteine + H(+). The enzyme catalyses gamma-tocotrienol + S-adenosyl-L-methionine = alpha-tocotrienol + S-adenosyl-L-homocysteine + H(+). It catalyses the reaction delta-tocopherol + S-adenosyl-L-methionine = beta-tocopherol + S-adenosyl-L-homocysteine + H(+). The protein operates within cofactor biosynthesis; tocopherol biosynthesis. Its function is as follows. Involved in the synthesis of tocopherol (vitamin E). Methylates gamma- and delta-tocopherol to form beta- and alpha-tocopherol, respectively. In Oryza sativa subsp. japonica (Rice), this protein is Probable tocopherol O-methyltransferase, chloroplastic (VTE4).